The following is a 626-amino-acid chain: tRNA uridine 5-carboxymethylaminomethyl modification enzyme MnmG (626 aa).

FAD is bound at residue 14–19; the sequence is GAGHAG. NAD(+) is bound at residue 273-287; that stretch reads GPRYCPSIEDKVVRF.

It belongs to the MnmG family. Homodimer. Heterotetramer of two MnmE and two MnmG subunits. Requires FAD as cofactor.

It is found in the cytoplasm. NAD-binding protein involved in the addition of a carboxymethylaminomethyl (cmnm) group at the wobble position (U34) of certain tRNAs, forming tRNA-cmnm(5)s(2)U34. The chain is tRNA uridine 5-carboxymethylaminomethyl modification enzyme MnmG from Caldicellulosiruptor saccharolyticus (strain ATCC 43494 / DSM 8903 / Tp8T 6331).